Here is a 503-residue protein sequence, read N- to C-terminus: Activin receptor type-1-like (503 aa).

Positions 1 to 21 (MTLGSPRRGLLMLLMALVTQG) are cleaved as a signal peptide. The Extracellular segment spans residues 22-118 (DPVKPSRGPL…PSEQPGTDGQ (97 aa)). 3 disulfide bridges follow: Cys-34-Cys-51, Cys-36-Cys-41, and Cys-46-Cys-69. The interval 73-76 (HREL) is mediates specificity for BMP ligand. Cystine bridges form between Cys-77–Cys-89 and Cys-90–Cys-95. N-linked (GlcNAc...) asparagine glycosylation is present at Asn-98. The helical transmembrane segment at 119 to 141 (LALILGPVLALLALVALGVLGLW) threads the bilayer. Topologically, residues 142 to 503 (HVRRRQEKQR…NSPEKPKVIQ (362 aa)) are cytoplasmic. 3 positions are modified to phosphoserine: Ser-155, Ser-160, and Ser-161. The region spanning 172–201 (SMLGDLLDSDCTTGSGSGLPFLVQRTVARQ) is the GS domain. Residues 202–492 (VALVECVGKG…LRIKKTLQKI (291 aa)) form the Protein kinase domain. Residues 208–216 (VGKGRYGEV) and Lys-229 contribute to the ATP site. Asp-330 functions as the Proton acceptor in the catalytic mechanism.

This sequence belongs to the protein kinase superfamily. TKL Ser/Thr protein kinase family. TGFB receptor subfamily. In terms of assembly, interacts with TSC22D1/TSC-22. Requires Mg(2+) as cofactor. Mn(2+) is required as a cofactor.

Its subcellular location is the cell membrane. The enzyme catalyses L-threonyl-[receptor-protein] + ATP = O-phospho-L-threonyl-[receptor-protein] + ADP + H(+). It carries out the reaction L-seryl-[receptor-protein] + ATP = O-phospho-L-seryl-[receptor-protein] + ADP + H(+). Functionally, type I receptor for TGF-beta family ligands BMP9/GDF2 and BMP10 and important regulator of normal blood vessel development. On ligand binding, forms a receptor complex consisting of two type II and two type I transmembrane serine/threonine kinases. Type II receptors phosphorylate and activate type I receptors which autophosphorylate, then bind and activate SMAD transcriptional regulators. May bind activin as well. The sequence is that of Activin receptor type-1-like (ACVRL1) from Pongo abelii (Sumatran orangutan).